The following is a 290-amino-acid chain: Light-independent protochlorophyllide reductase iron-sulfur ATP-binding protein (290 aa).

ATP-binding positions include 10–15 (GIGKST) and Lys-39. Ser-14 contacts Mg(2+). Residues Cys-95 and Cys-129 each coordinate [4Fe-4S] cluster. 180–181 (NR) provides a ligand contact to ATP.

It belongs to the NifH/BchL/ChlL family. As to quaternary structure, homodimer. Protochlorophyllide reductase is composed of three subunits; ChlL, ChlN and ChlB. It depends on [4Fe-4S] cluster as a cofactor.

The protein resides in the plastid. It is found in the chloroplast. The catalysed reaction is chlorophyllide a + oxidized 2[4Fe-4S]-[ferredoxin] + 2 ADP + 2 phosphate = protochlorophyllide a + reduced 2[4Fe-4S]-[ferredoxin] + 2 ATP + 2 H2O. Its pathway is porphyrin-containing compound metabolism; chlorophyll biosynthesis (light-independent). Component of the dark-operative protochlorophyllide reductase (DPOR) that uses Mg-ATP and reduced ferredoxin to reduce ring D of protochlorophyllide (Pchlide) to form chlorophyllide a (Chlide). This reaction is light-independent. The L component serves as a unique electron donor to the NB-component of the complex, and binds Mg-ATP. The chain is Light-independent protochlorophyllide reductase iron-sulfur ATP-binding protein from Pyropia yezoensis (Susabi-nori).